Consider the following 259-residue polypeptide: Tryptophan synthase alpha chain (259 aa).

Active-site proton acceptor residues include Glu35 and Asp46.

It belongs to the TrpA family. In terms of assembly, tetramer of two alpha and two beta chains.

The enzyme catalyses (1S,2R)-1-C-(indol-3-yl)glycerol 3-phosphate + L-serine = D-glyceraldehyde 3-phosphate + L-tryptophan + H2O. It participates in amino-acid biosynthesis; L-tryptophan biosynthesis; L-tryptophan from chorismate: step 5/5. Functionally, the alpha subunit is responsible for the aldol cleavage of indoleglycerol phosphate to indole and glyceraldehyde 3-phosphate. The chain is Tryptophan synthase alpha chain from Methanococcus maripaludis (strain C7 / ATCC BAA-1331).